Reading from the N-terminus, the 206-residue chain is Ribosomal RNA small subunit methyltransferase G (206 aa).

Residues glycine 71, phenylalanine 76, 125–126 (IE), and arginine 139 contribute to the S-adenosyl-L-methionine site.

It belongs to the methyltransferase superfamily. RNA methyltransferase RsmG family.

Its subcellular location is the cytoplasm. The catalysed reaction is guanosine(527) in 16S rRNA + S-adenosyl-L-methionine = N(7)-methylguanosine(527) in 16S rRNA + S-adenosyl-L-homocysteine. Specifically methylates the N7 position of guanine in position 527 of 16S rRNA. In Cereibacter sphaeroides (strain ATCC 17029 / ATH 2.4.9) (Rhodobacter sphaeroides), this protein is Ribosomal RNA small subunit methyltransferase G.